The sequence spans 522 residues: Sorting nexin-1 (522 aa).

A disordered region spans residues 1 to 144 (MASGGGGCSA…EEEEQEDQFD (144 aa)). A phosphoserine mark is found at Ser32 and Ser39. The span at 35–45 (EAGDSDTEGED) shows a compositional bias: acidic residues. 2 positions are modified to phosphothreonine: Thr41 and Thr48. A compositionally biased stretch (polar residues) spans 55–65 (KPQSPKKTTSL). 2 positions are modified to phosphoserine: Ser58 and Ser72. Positions 71-80 (GSKENGIHED) are enriched in basic and acidic residues. The span at 98 to 125 (LDSTQNNQKTMPGKTLTSHSPQEATNSP) shows a compositional bias: polar residues. The span at 132–143 (EELEEEEQEDQF) shows a compositional bias: acidic residues. One can recognise a PX domain in the interval 143 to 272 (FDLTVGITDP…EFLEKEELPR (130 aa)). A 1,2-diacyl-sn-glycero-3-phospho-(1D-myo-inositol-3-phosphate) is bound by residues Arg186, Ser188, and Lys214. A Phosphoserine modification is found at Ser188. The residue at position 237 (Lys237) is an N6-acetyllysine. A 1,2-diacyl-sn-glycero-3-phospho-(1D-myo-inositol-3-phosphate) is bound at residue Arg238. Phosphoserine is present on Ser280. The membrane-binding amphipathic helix stretch occupies residues 281 to 298 (GAGLLKMFNKATDAVSKM). The BAR domain maps to 302 to 522 (MNESDIWFEE…AFLPEAKAIS (221 aa)).

Belongs to the sorting nexin family. In terms of assembly, predominantly forms heterodimers with BAR domain-containing sorting nexins SNX5, SNX6 and SNX32. Can self-associate to form homodimers. The heterodimers are proposed to self-assemble into helical arrays on the membrane to stabilize and expand local membrane curvature underlying endosomal tubule formation. Thought to be a component of the originally described retromer complex (also called SNX-BAR retromer) which is a pentamer containing the heterotrimeric retromer cargo-selective complex (CSC), also described as vacuolar protein sorting subcomplex (VPS) and a heterodimeric membrane-deforming subcomplex formed between SNX1 or SNX2 and SNX5 or SNX6 (also called SNX-BAR subcomplex); the respective CSC and SNX-BAR subcomplexes associate with low affinity. Interacts with SNX5, SNX6, SNX32, VPS26A, VPS29, VPS35, DRD5, DENND5A, KALRN, RHOG (GDP-bound form). The interaction with SNX2 is reported controversially. Interacts with DNAJC13; prevented by presence of HGS. Interacts with HGS.

It is found in the endosome membrane. The protein resides in the golgi apparatus. It localises to the trans-Golgi network membrane. The protein localises to the early endosome membrane. Its subcellular location is the cell projection. It is found in the lamellipodium. Its function is as follows. Involved in several stages of intracellular trafficking. Interacts with membranes containing phosphatidylinositol 3-phosphate (PtdIns(3P)) or phosphatidylinositol 3,5-bisphosphate (PtdIns(3,5)P2). Acts in part as component of the retromer membrane-deforming SNX-BAR subcomplex. The SNX-BAR retromer mediates retrograde transport of cargo proteins from endosomes to the trans-Golgi network (TGN) and is involved in endosome-to-plasma membrane transport for cargo protein recycling. The SNX-BAR subcomplex functions to deform the donor membrane into a tubular profile called endosome-to-TGN transport carrier (ETC). Can sense membrane curvature and has in vitro vesicle-to-membrane remodeling activity. Involved in retrograde endosome-to-TGN transport of lysosomal enzyme receptors (IGF2R, M6PR and SORT1). Plays a role in targeting ligand-activated EGFR to the lysosomes for degradation after endocytosis from the cell surface and release from the Golgi. Involvement in retromer-independent endocytic trafficking of P2RY1 and lysosomal degradation of protease-activated receptor-1/F2R. Promotes KALRN- and RHOG-dependent but retromer-independent membrane remodeling such as lamellipodium formation; the function is dependent on GEF activity of KALRN. Required for endocytosis of DRD5 upon agonist stimulation but not for basal receptor trafficking. The polypeptide is Sorting nexin-1 (Snx1) (Mus musculus (Mouse)).